Here is a 186-residue protein sequence, read N- to C-terminus: Nicotinamide-nucleotide adenylyltransferase (186 aa).

It belongs to the archaeal NMN adenylyltransferase family.

The protein resides in the cytoplasm. It catalyses the reaction beta-nicotinamide D-ribonucleotide + ATP + H(+) = diphosphate + NAD(+). It participates in cofactor biosynthesis; NAD(+) biosynthesis; NAD(+) from nicotinamide D-ribonucleotide: step 1/1. This is Nicotinamide-nucleotide adenylyltransferase from Thermococcus sibiricus (strain DSM 12597 / MM 739).